The sequence spans 268 residues: MNGNSIIGLIGHPVSHSIGQILYNRIFQDMGIDAFYLAMDVHMNVLPAFLKNSFFLKAFNVTIPHKVSIIPFLDDLDEIASQTRSVNLVIREQSRMKGYNTDYYGLDYALSFNQVEIEEKRIVIAGSGGIARTVIRYMLDHGAHRVDVLTRNAQNARRNLDIPGIGLHENIDEDYDIYVNCTPLGTLGDGDPFSTVDFRSGRTGIDLVYNPPDTPFLKRMRNAGGRTVSGLDVFIGQGLRTLELVFGIRPDSIFREYAVEALNEIRKG.

T62 provides a ligand contact to shikimate. Residue K66 is the Proton acceptor of the active site. Position 78 (E78) interacts with NADP(+). Residues N87 and D102 each coordinate shikimate. Residues G126–I130 and L207 contribute to the NADP(+) site. Y209 provides a ligand contact to shikimate. G230 provides a ligand contact to NADP(+).

The protein belongs to the shikimate dehydrogenase family. As to quaternary structure, homodimer.

It catalyses the reaction shikimate + NADP(+) = 3-dehydroshikimate + NADPH + H(+). The protein operates within metabolic intermediate biosynthesis; chorismate biosynthesis; chorismate from D-erythrose 4-phosphate and phosphoenolpyruvate: step 4/7. Functionally, involved in the biosynthesis of the chorismate, which leads to the biosynthesis of aromatic amino acids. Catalyzes the reversible NADPH linked reduction of 3-dehydroshikimate (DHSA) to yield shikimate (SA). This chain is Shikimate dehydrogenase (NADP(+)), found in Thermoplasma acidophilum (strain ATCC 25905 / DSM 1728 / JCM 9062 / NBRC 15155 / AMRC-C165).